The sequence spans 448 residues: N-succinylarginine dihydrolase (448 aa).

Residues G19–S28, N110, and H137–R138 each bind substrate. The active site involves E174. Residue R214 participates in substrate binding. The active site involves H250. D252 and N365 together coordinate substrate. The active-site Nucleophile is C371.

It belongs to the succinylarginine dihydrolase family. As to quaternary structure, homodimer.

It catalyses the reaction N(2)-succinyl-L-arginine + 2 H2O + 2 H(+) = N(2)-succinyl-L-ornithine + 2 NH4(+) + CO2. It functions in the pathway amino-acid degradation; L-arginine degradation via AST pathway; L-glutamate and succinate from L-arginine: step 2/5. Its function is as follows. Catalyzes the hydrolysis of N(2)-succinylarginine into N(2)-succinylornithine, ammonia and CO(2). This is N-succinylarginine dihydrolase from Pseudomonas paraeruginosa (strain DSM 24068 / PA7) (Pseudomonas aeruginosa (strain PA7)).